The primary structure comprises 268 residues: Exodeoxyribonuclease III (268 aa).

Glu-34 contacts Mg(2+). Residue Tyr-109 is part of the active site. 3 residues coordinate Mg(2+): Asp-151, Asn-153, and Asp-258. The active-site Proton donor/acceptor is the Asp-151.

This sequence belongs to the DNA repair enzymes AP/ExoA family. Monomer. Mg(2+) serves as cofactor. Mn(2+) is required as a cofactor.

The enzyme catalyses Exonucleolytic cleavage in the 3'- to 5'-direction to yield nucleoside 5'-phosphates.. Major apurinic-apyrimidinic endonuclease of E.coli. It removes the damaged DNA at cytosines and guanines by cleaving on the 3'-side of the AP site by a beta-elimination reaction. It exhibits 3'-5'-exonuclease, 3'-phosphomonoesterase, 3'-repair diesterase and ribonuclease H activities. In Salmonella typhi, this protein is Exodeoxyribonuclease III (xthA).